A 521-amino-acid chain; its full sequence is Amidase (521 aa).

Residues K96 and S171 each act as charge relay system in the active site. The segment at S155–G174 is disordered. The active-site Acyl-ester intermediate is the S195.

The protein belongs to the amidase family. In terms of assembly, homodimer.

It catalyses the reaction a monocarboxylic acid amide + H2O = a monocarboxylate + NH4(+). Hydrolyzes propionamides efficiently, and also at a lower efficiency, acetamide, acrylamide and indoleacetamide. This enzyme seems to be stereospecific and can lead to the production of a single enantiomer. The sequence is that of Amidase (amdA) from Rhodococcus erythropolis (Arthrobacter picolinophilus).